A 689-amino-acid polypeptide reads, in one-letter code: Glycine--tRNA ligase beta subunit (689 aa).

It belongs to the class-II aminoacyl-tRNA synthetase family. Tetramer of two alpha and two beta subunits.

The protein localises to the cytoplasm. The enzyme catalyses tRNA(Gly) + glycine + ATP = glycyl-tRNA(Gly) + AMP + diphosphate. The polypeptide is Glycine--tRNA ligase beta subunit (Citrobacter koseri (strain ATCC BAA-895 / CDC 4225-83 / SGSC4696)).